The chain runs to 445 residues: ATPase PAAT (445 aa).

4 positions are modified to phosphoserine: S177, S182, S254, and S302. Residues 426–445 form a disordered region; that stretch reads PTGIPLRHYDSGERLSNGER. Residues 432–445 are compositionally biased toward basic and acidic residues; that stretch reads RHYDSGERLSNGER.

Homodimer. Interacts with ABCB7, ABCB8/MITOSUR and ABCB10.

Its subcellular location is the cytoplasm. The protein localises to the mitochondrion. It carries out the reaction ATP + H2O = ADP + phosphate + H(+). Functionally, ATPase that regulates mitochondrial ABC transporters ABCB7, ABCB8/MITOSUR and ABCB10. Regulates mitochondrial ferric concentration and heme biosynthesis and plays a role in the maintenance of mitochondrial homeostasis and cell survival. The protein is ATPase PAAT of Homo sapiens (Human).